The following is a 650-amino-acid chain: Threonine--tRNA ligase (650 aa).

The TGS domain occupies 1 to 61 (MIKITFPDGA…DEDGTLEIVM (61 aa)). A catalytic region spans residues 242 to 540 (DHRKLGKELD…LIETYKGAFP (299 aa)). Positions 336, 387, and 517 each coordinate Zn(2+).

The protein belongs to the class-II aminoacyl-tRNA synthetase family. As to quaternary structure, homodimer. Zn(2+) is required as a cofactor.

The protein localises to the cytoplasm. The catalysed reaction is tRNA(Thr) + L-threonine + ATP = L-threonyl-tRNA(Thr) + AMP + diphosphate + H(+). Catalyzes the attachment of threonine to tRNA(Thr) in a two-step reaction: L-threonine is first activated by ATP to form Thr-AMP and then transferred to the acceptor end of tRNA(Thr). Also edits incorrectly charged L-seryl-tRNA(Thr). This is Threonine--tRNA ligase from Streptococcus suis (strain 98HAH33).